Reading from the N-terminus, the 412-residue chain is L-cysteine:1D-myo-inositol 2-amino-2-deoxy-alpha-D-glucopyranoside ligase (412 aa).

Residues 1–30 (MQTWSSPSVPKLRGAPRPLRLHDTATGEVR) form a disordered region. Position 43 (Cys-43) interacts with Zn(2+). Residues 43 to 46 (CGIT), Thr-58, and 81 to 83 (NVT) contribute to the L-cysteinyl-5'-AMP site. A 'HIGH' region motif is present at residues 45–55 (ITPYDATHLGH). Positions 187-192 (ERGGDP) match the 'ERGGDP' region motif. Trp-227 is a binding site for L-cysteinyl-5'-AMP. Cys-231 serves as a coordination point for Zn(2+). 249–251 (GSD) contacts L-cysteinyl-5'-AMP. A Zn(2+)-binding site is contributed by His-256. Ile-283 is a binding site for L-cysteinyl-5'-AMP. The 'KMSKS' region signature appears at 289-293 (KMSKS).

Belongs to the class-I aminoacyl-tRNA synthetase family. MshC subfamily. Monomer. The cofactor is Zn(2+).

The enzyme catalyses 1D-myo-inositol 2-amino-2-deoxy-alpha-D-glucopyranoside + L-cysteine + ATP = 1D-myo-inositol 2-(L-cysteinylamino)-2-deoxy-alpha-D-glucopyranoside + AMP + diphosphate + H(+). Its function is as follows. Catalyzes the ATP-dependent condensation of GlcN-Ins and L-cysteine to form L-Cys-GlcN-Ins. This is L-cysteine:1D-myo-inositol 2-amino-2-deoxy-alpha-D-glucopyranoside ligase from Actinosynnema mirum (strain ATCC 29888 / DSM 43827 / JCM 3225 / NBRC 14064 / NCIMB 13271 / NRRL B-12336 / IMRU 3971 / 101).